A 355-amino-acid chain; its full sequence is WD repeat domain phosphoinositide-interacting protein 4 (355 aa).

2 WD repeats span residues Ser2–His40 and Ala185–Glu225. The L/FRRG motif motif lies at Leu226–Gly229. Residues Thr230–Arg269 form a WD 3 repeat.

The protein belongs to the WD repeat PROPPIN family.

It localises to the preautophagosomal structure. Its function is as follows. Component of the autophagy machinery that controls the major intracellular degradation process by which cytoplasmic materials are packaged into autophagosomes and delivered to lysosomes for degradation. Binds phosphatidylinositol 3-phosphate (PtdIns3P). The protein is WD repeat domain phosphoinositide-interacting protein 4 (wdr45) of Xenopus laevis (African clawed frog).